A 491-amino-acid chain; its full sequence is MAENLAALDDDEAELRAATLRAGLDDYDLDEEDAALLSGEYGDEGDEGPLKLDPVLAIIGRPNVGKSTLVNRILGRREAVVEDTPGVTRDRVMYSARWNGRNFTLVDTGGWEHDAKGIHARVAEQAEMAVELADAVLFVVDSAVGATATDEGVMKMLRKSKKPVIMVANKVDDFAQEADSATLWGLGFGEPYPVSALHGRGVADLLDHVMDTLPEYSLVDGVERSGGPRRIALIGRPNVGKSSLLNKLAGSERVVVDPLAGTTRDPVDEFIELGDRTWRFVDTAGIRRRQHMAQGADFYASLRTQAALEKAEVAVVLLAVDEVLSEQDVRILQLAIESGRALVLAFNKWDLLDDERRRYLEREIEQDLAHVEWAPRVNISAKTGWHKDRLVPALDIALESWDRRIPTGRLNAFLGELVAAHPHPVRGGKQPRILFGTQASSRPPKFVLFTTGFLDPGYRRFITRRLRETFGFEGTPIEVNMRVREKRGKKR.

EngA-type G domains are found at residues 54–217 and 229–402; these read PVLA…PEYS and RRIA…ESWD. Residues 60–67, 107–111, 169–172, 235–242, 282–286, and 347–350 each bind GTP; these read GRPNVGKS, DTGGW, NKVD, DTAGI, and NKWD. A KH-like domain is found at 403–485; sequence RRIPTGRLNA…PIEVNMRVRE (83 aa).

Belongs to the TRAFAC class TrmE-Era-EngA-EngB-Septin-like GTPase superfamily. EngA (Der) GTPase family. As to quaternary structure, associates with the 50S ribosomal subunit.

Its function is as follows. GTPase that plays an essential role in the late steps of ribosome biogenesis. This is GTPase Der from Paenarthrobacter aurescens (strain TC1).